A 61-amino-acid polypeptide reads, in one-letter code: Small ribosomal subunit protein uS14 (61 aa).

4 residues coordinate Zn(2+): C24, C27, C40, and C43.

The protein belongs to the universal ribosomal protein uS14 family. Zinc-binding uS14 subfamily. Part of the 30S ribosomal subunit. Contacts proteins S3 and S10. The cofactor is Zn(2+).

In terms of biological role, binds 16S rRNA, required for the assembly of 30S particles and may also be responsible for determining the conformation of the 16S rRNA at the A site. This Desulforamulus reducens (strain ATCC BAA-1160 / DSM 100696 / MI-1) (Desulfotomaculum reducens) protein is Small ribosomal subunit protein uS14.